The following is a 493-amino-acid chain: Galactose-1-phosphate uridylyltransferase (493 aa).

It belongs to the galactose-1-phosphate uridylyltransferase type 2 family.

Its subcellular location is the cytoplasm. The catalysed reaction is alpha-D-galactose 1-phosphate + UDP-alpha-D-glucose = alpha-D-glucose 1-phosphate + UDP-alpha-D-galactose. It participates in carbohydrate metabolism; galactose metabolism. The polypeptide is Galactose-1-phosphate uridylyltransferase (Streptococcus thermophilus (strain CNRZ 1066)).